The primary structure comprises 189 residues: Large ribosomal subunit protein bL9 (189 aa).

Belongs to the bacterial ribosomal protein bL9 family.

Binds to the 23S rRNA. The chain is Large ribosomal subunit protein bL9 from Brucella ovis (strain ATCC 25840 / 63/290 / NCTC 10512).